The chain runs to 296 residues: Short-chain dehydrogenase/reductase ascJ (296 aa).

Residues isoleucine 28, aspartate 66, and asparagine 93 each coordinate NADP(+). Catalysis depends on serine 155, which acts as the Proton donor. 3 residues coordinate NADP(+): tyrosine 168, lysine 172, and threonine 205. The Proton acceptor role is filled by tyrosine 168. Lysine 172 (lowers pKa of active site Tyr) is an active-site residue.

This sequence belongs to the short-chain dehydrogenases/reductases (SDR) family.

The catalysed reaction is ascofuranol + A = ascofuranone + AH2. The protein operates within secondary metabolite biosynthesis; terpenoid biosynthesis. Short-chain dehydrogenase/reductase; part of the asc-2 gene cluster that mediates the biosynthesis of ascofuranone, a strong inhibitor of cyanide-insensitive alternative oxidases and a promising drug candidate against African trypanosomiasis. The first step in the pathway is performed by the non-reducing polyketide synthase ascC that produces orsellinic acid by condensing acetyl-CoA with 3 malonyl-CoA units. Orsellinic acid is then prenylated by the prenyltransferase ascA to yield ilicicolinic acid B. Ilicicolinic acid B is further reduced to ilicicolin B by the reductase ascB. The halogenase ascD then chlorinates ilicicolin B to produce ilicicolin A which is converted to ilicicolin A epoxide by the cytochrome P450 monooxygenase ascE that catalyzes stereoselective epoxidation of the terminal double bond of the prenyl group. Ilicicolin A epoxide is the last common precursor for the biosynthesis of ascofuranone and ascochlorin. The terpene cyclase ascF produces a monocyclic terpene, and the cyclization reaction is proposed to be initiated by protonation of the terminal epoxide of ilicicolin A epoxide to generate a monocyclic tertiarycation, which is followed by a series of hydride and methyl shifts with abstraction of proton, leading to the formation of the (14S,15R,19R)-trimethylcyclohexanone ring structure of ilicicolin C, which is finally reduced to ascochlorin by the dehydrogenase ascG. On the other hand, ilicicolin A epoxide is hydroxylated by the cytochrome P450 monooxygenase ascH, and the resultant product is cyclized by the terpene cyclase ascI to ascofuranol via protonation-initiated epoxide ring opening, which facilitates the 6-endo-tet cyclization to form the tetrahy-drofuran ring. Finally, ascofuranol is oxidized into ascofuranone by ascJ. The polypeptide is Short-chain dehydrogenase/reductase ascJ (Acremonium egyptiacum (Oospora egyptiaca)).